The chain runs to 526 residues: ATP synthase subunit alpha (526 aa).

174-181 (GDRKTGKT) is an ATP binding site. Positions 505–520 (FEPARSEVKVETRPQE) are enriched in basic and acidic residues. The segment at 505–526 (FEPARSEVKVETRPQEEEGEEG) is disordered.

This sequence belongs to the ATPase alpha/beta chains family. F-type ATPases have 2 components, CF(1) - the catalytic core - and CF(0) - the membrane proton channel. CF(1) has five subunits: alpha(3), beta(3), gamma(1), delta(1), epsilon(1). CF(0) has three main subunits: a(1), b(2) and c(9-12). The alpha and beta chains form an alternating ring which encloses part of the gamma chain. CF(1) is attached to CF(0) by a central stalk formed by the gamma and epsilon chains, while a peripheral stalk is formed by the delta and b chains.

The protein localises to the cell membrane. It catalyses the reaction ATP + H2O + 4 H(+)(in) = ADP + phosphate + 5 H(+)(out). Produces ATP from ADP in the presence of a proton gradient across the membrane. The alpha chain is a regulatory subunit. This Rubrobacter xylanophilus (strain DSM 9941 / JCM 11954 / NBRC 16129 / PRD-1) protein is ATP synthase subunit alpha.